We begin with the raw amino-acid sequence, 202 residues long: UMP-CMP kinase 3 (202 aa).

24-29 (GSGKGT) provides a ligand contact to ATP. The segment at 44-73 (SAGDLLRAEIKSGSENGTMIQNMIKEGKIV) is NMP. A ribonucleoside 5'-phosphate is bound by residues R50, 71-73 (KIV), and 98-101 (GFPR). N105 contributes to the CMP binding site. Positions 136–144 (GRNQGREDD) are LID. Residue R137 participates in ATP binding. A ribonucleoside 5'-phosphate-binding residues include R141 and R152. K180 is a binding site for ATP.

As to quaternary structure, monomer. Requires Mg(2+) as cofactor.

It localises to the cytoplasm. The protein resides in the nucleus. The enzyme catalyses CMP + ATP = CDP + ADP. The catalysed reaction is dCMP + ATP = dCDP + ADP. It carries out the reaction UMP + ATP = UDP + ADP. Functionally, catalyzes the phosphorylation of pyrimidine nucleoside monophosphates at the expense of ATP. Plays an important role in de novo pyrimidine nucleotide biosynthesis. Has preference for UMP and CMP as phosphate acceptors. Does not act on dCMP and dUMP. This Arabidopsis thaliana (Mouse-ear cress) protein is UMP-CMP kinase 3 (UMK3).